The chain runs to 142 residues: Large ribosomal subunit protein uL13 (142 aa).

Belongs to the universal ribosomal protein uL13 family. Part of the 50S ribosomal subunit.

Functionally, this protein is one of the early assembly proteins of the 50S ribosomal subunit, although it is not seen to bind rRNA by itself. It is important during the early stages of 50S assembly. This Buchnera aphidicola subsp. Acyrthosiphon pisum (strain 5A) protein is Large ribosomal subunit protein uL13.